The sequence spans 434 residues: Probable phosphoglucosamine mutase (434 aa).

The Phosphoserine intermediate role is filled by Ser-91. Mg(2+) is bound by residues Ser-91, Asp-229, Asp-231, and Asp-233. Ser-91 is subject to Phosphoserine.

Belongs to the phosphohexose mutase family. It depends on Mg(2+) as a cofactor. In terms of processing, activated by phosphorylation.

It catalyses the reaction alpha-D-glucosamine 1-phosphate = D-glucosamine 6-phosphate. Its function is as follows. Catalyzes the conversion of glucosamine-6-phosphate to glucosamine-1-phosphate. In Methanosarcina acetivorans (strain ATCC 35395 / DSM 2834 / JCM 12185 / C2A), this protein is Probable phosphoglucosamine mutase.